We begin with the raw amino-acid sequence, 130 residues long: Protein ApaG (130 aa).

The ApaG domain occupies 3-127 (RAVTRQIEVL…FSLDSPDIRR (125 aa)).

In Afipia carboxidovorans (strain ATCC 49405 / DSM 1227 / KCTC 32145 / OM5) (Oligotropha carboxidovorans), this protein is Protein ApaG.